Here is a 430-residue protein sequence, read N- to C-terminus: Adenylosuccinate synthetase (430 aa).

GTP-binding positions include 13–19 and 41–43; these read GDEGKGK and GHT. The active-site Proton acceptor is D14. Residues D14 and G41 each contribute to the Mg(2+) site. IMP contacts are provided by residues 14–17, 39–42, T130, R144, Q225, T240, and R304; these read DEGK and NAGH. H42 acts as the Proton donor in catalysis. 300–306 provides a ligand contact to substrate; the sequence is ATTGRAR. Residues R306, 332–334, and 414–416 contribute to the GTP site; these read KLD and STG.

Belongs to the adenylosuccinate synthetase family. Homodimer. It depends on Mg(2+) as a cofactor.

It is found in the cytoplasm. It carries out the reaction IMP + L-aspartate + GTP = N(6)-(1,2-dicarboxyethyl)-AMP + GDP + phosphate + 2 H(+). It participates in purine metabolism; AMP biosynthesis via de novo pathway; AMP from IMP: step 1/2. In terms of biological role, plays an important role in the de novo pathway of purine nucleotide biosynthesis. Catalyzes the first committed step in the biosynthesis of AMP from IMP. The protein is Adenylosuccinate synthetase of Pseudomonas syringae pv. tomato (strain ATCC BAA-871 / DC3000).